Consider the following 276-residue polypeptide: F420-dependent methylenetetrahydromethanopterin dehydrogenase (276 aa).

This sequence belongs to the MTD family.

The catalysed reaction is 5,10-methylenetetrahydromethanopterin + oxidized coenzyme F420-(gamma-L-Glu)(n) + 2 H(+) = 5,10-methenyl-5,6,7,8-tetrahydromethanopterin + reduced coenzyme F420-(gamma-L-Glu)(n). It functions in the pathway one-carbon metabolism; methanogenesis from CO(2); 5,10-methylene-5,6,7,8-tetrahydromethanopterin from 5,10-methenyl-5,6,7,8-tetrahydromethanopterin (coenzyme F420 route): step 1/1. Its function is as follows. Catalyzes the reversible reduction of methenyl-H(4)MPT(+) to methylene-H(4)MPT. This is F420-dependent methylenetetrahydromethanopterin dehydrogenase from Methanococcus vannielii (strain ATCC 35089 / DSM 1224 / JCM 13029 / OCM 148 / SB).